The sequence spans 262 residues: Carbonic anhydrase 13 (262 aa).

In terms of domain architecture, Alpha-carbonic anhydrase spans L4–F261. H65 (proton donor/acceptor) is an active-site residue. Residues H95, H97, and H120 each contribute to the Zn(2+) site. Substrate is bound at residue T200–V201.

This sequence belongs to the alpha-carbonic anhydrase family. Zn(2+) is required as a cofactor. In terms of tissue distribution, expressed in spleen, lung, kidney, heart, brain, skeletal muscle and testis.

The enzyme catalyses hydrogencarbonate + H(+) = CO2 + H2O. Inhibited by coumarins, sulfonamide derivatives such as acetazolamide (AZA) and Foscarnet (phosphonoformate trisodium salt). Reversible hydration of carbon dioxide. The polypeptide is Carbonic anhydrase 13 (Ca13) (Mus musculus (Mouse)).